A 152-amino-acid chain; its full sequence is Protein Smg homolog (152 aa).

This sequence belongs to the Smg family.

This Bordetella avium (strain 197N) protein is Protein Smg homolog.